A 596-amino-acid polypeptide reads, in one-letter code: Two-component response regulator ARR12 (596 aa).

The Response regulatory domain maps to 18-133 (RVLAVDDDQT…ELKNIWQHVV (116 aa)). D69 is subject to 4-aspartylphosphate. Residues 138–153 (DKNRGSNNNGDKRDGS) are compositionally biased toward basic and acidic residues. Residues 138-192 (DKNRGSNNNGDKRDGSGNEGVGNSDQNNGKGNRKRKDQYNEDEDEDRDDNDDSCA) are disordered. Residues 158–167 (VGNSDQNNGK) show a composition bias toward polar residues. Residues 177-189 (NEDEDEDRDDNDD) are compositionally biased toward acidic residues. A Nuclear localization signal motif is present at residues 194–197 (KKQR). Positions 197–247 (RVVWTVELHKKFVAAVNQLGYEKAMPKKILDLMNVEKLTRENVASHLQKFR) form a DNA-binding region, myb-like GARP. The interval 437 to 467 (NAVSSSTHPPPPAHNSNSINHQFDVSPLPHS) is disordered. Positions 450–459 (HNSNSINHQF) are enriched in polar residues.

It belongs to the ARR family. Type-B subfamily. As to quaternary structure, binds the target DNA as a monomer. In terms of processing, two-component system major event consists of a His-to-Asp phosphorelay between a sensor histidine kinase (HK) and a response regulator (RR). In plants, the His-to-Asp phosphorelay involves an additional intermediate named Histidine-containing phosphotransfer protein (HPt). This multistep phosphorelay consists of a His-Asp-His-Asp sequential transfer of a phosphate group between first a His and an Asp of the HK protein, followed by the transfer to a conserved His of the HPt protein and finally the transfer to an Asp in the receiver domain of the RR protein. In terms of tissue distribution, detected in the whole plant. Predominantly expressed in leaves. Expressed at the root transition zone.

The protein resides in the nucleus. Functionally, transcriptional activator that binds specifically to the DNA sequence 5'-[AG]GATT-3'. Functions as a response regulator involved in His-to-Asp phosphorelay signal transduction system. Phosphorylation of the Asp residue in the receiver domain activates the ability of the protein to promote the transcription of target genes. Could directly activate some type-A response regulators in response to cytokinins. Involved in the root-meristem size determination through the regulation of cell differentiation. Involved in activating SHY2 during meristem growth and controls PIN expression via activation of SHY2. This chain is Two-component response regulator ARR12 (ARR12), found in Arabidopsis thaliana (Mouse-ear cress).